The primary structure comprises 227 residues: 2,3-bisphosphoglycerate-dependent phosphoglycerate mutase (227 aa).

Substrate contacts are provided by residues 7–14 (RHGFSEWN), 20–21 (TG), arginine 59, 86–89 (ERHY), lysine 97, 113–114 (RR), and 182–183 (GN). Residue histidine 8 is the Tele-phosphohistidine intermediate of the active site. Catalysis depends on glutamate 86, which acts as the Proton donor/acceptor.

This sequence belongs to the phosphoglycerate mutase family. BPG-dependent PGAM subfamily. As to quaternary structure, homodimer.

The enzyme catalyses (2R)-2-phosphoglycerate = (2R)-3-phosphoglycerate. The protein operates within carbohydrate degradation; glycolysis; pyruvate from D-glyceraldehyde 3-phosphate: step 3/5. In terms of biological role, catalyzes the interconversion of 2-phosphoglycerate and 3-phosphoglycerate. This is 2,3-bisphosphoglycerate-dependent phosphoglycerate mutase from Haemophilus ducreyi (strain 35000HP / ATCC 700724).